Here is a 611-residue protein sequence, read N- to C-terminus: Leukotriene A-4 hydrolase (611 aa).

Residue lysine 73 is modified to N6-acetyllysine. A peptide is bound by residues 135-137 (QCQ) and 267-272 (PYGGME). Histidine 296 is a binding site for Zn(2+). Glutamate 297 (proton acceptor) is an active-site residue. 2 residues coordinate Zn(2+): histidine 300 and glutamate 319. Residue lysine 337 is modified to N6-acetyllysine. Catalysis depends on tyrosine 384, which acts as the Proton donor. Lysine 414 is subject to N6-acetyllysine. Serine 416 carries the post-translational modification Phosphoserine. 564-566 (RMK) contacts a peptide. Lysine 573 carries the post-translational modification N6-acetyllysine.

The protein belongs to the peptidase M1 family. As to quaternary structure, monomer. Zn(2+) serves as cofactor. Phosphorylation at Ser-416 inhibits leukotriene-A4 hydrolase activity.

It localises to the cytoplasm. The enzyme catalyses leukotriene A4 + H2O = leukotriene B4. It carries out the reaction (5S,6S)-epoxy-(18R)-hydroxy-(7E,9E,11Z,14Z,16E)-eicosapentaenoate + H2O = resolvin E1. The catalysed reaction is (5S,6S)-epoxy-(18S)-hydroxy-(7E,9E,11Z,14Z,16E)-eicosapentaenoate + H2O = 18S-resolvin E1. It catalyses the reaction Release of the N-terminal residue from a tripeptide.. Its pathway is lipid metabolism; leukotriene B4 biosynthesis. Inhibited by bestatin. Inhibited by captopril. The epoxide hydrolase activity is restrained by suicide inactivation that involves binding of LTA4 to Tyr-379. 4-(4-benzylphenyl)thiazol-2-amine (ARM1) selectively inhibits the epoxide hydrolase activity. In terms of biological role, bifunctional zinc metalloenzyme that comprises both epoxide hydrolase (EH) and aminopeptidase activities. Acts as an epoxide hydrolase to catalyze the conversion of LTA4 to the pro-inflammatory mediator leukotriene B4 (LTB4). Also has aminopeptidase activity, with high affinity for N-terminal arginines of various synthetic tripeptides. In addition to its pro-inflammatory EH activity, may also counteract inflammation by its aminopeptidase activity, which inactivates by cleavage another neutrophil attractant, the tripeptide Pro-Gly-Pro (PGP), a bioactive fragment of collagen generated by the action of matrix metalloproteinase-9 (MMP9) and prolylendopeptidase (PREPL). Involved also in the biosynthesis of resolvin E1 and 18S-resolvin E1 from eicosapentaenoic acid, two lipid mediators that show potent anti-inflammatory and pro-resolving actions. The polypeptide is Leukotriene A-4 hydrolase (Lta4h) (Rattus norvegicus (Rat)).